A 495-amino-acid polypeptide reads, in one-letter code: MGLTWKQRVFTALLGAAAVSGLTALLLVLVGTMNVLLPPDTKFGIVFDAGSSHTSLFVYQWPANKENDTGIVSQALACQAEGPGISSYASNPARVGESLQGCLEEALALIPKAKHHETPMFLGATAGMRLLSRKNRSQAEDVFAAVSRALGQSPVDFRGAELLTGQDEGAFGWITINYILGLLVKYSFSGEWIRPLEETLVGALDMGGASTQITFVPGGPILDKTAQATFRLYGADHTVYTHSYLCFGRDQALSRVLAELVQASTGLLIRHPCYHSGYRGTLALASLYESPCAPAAPPDLSQNLTVEGTGNPGACVEALRKLFNFSSCDGREDCAFAGVYQPPVQGQFYAFSNFYYTFNFLNLTSKPSLSGANATIWEFCLRPWKLVEASAPPGQDRWLRDYCASGLYILTLLVEGYGFSEETWGGIEFRQQAGGADIGWTLGYMLNLTNLIPAEAPAQGWAQSFGVWAAGVVFVVLTLAATLGAVAVQVFWLQD.

Over 1–8 the chain is Cytoplasmic; it reads MGLTWKQR. A helical membrane pass occupies residues 9-29; the sequence is VFTALLGAAAVSGLTALLLVL. Residues 30-466 are Extracellular-facing; sequence VGTMNVLLPP…PAQGWAQSFG (437 aa). Cys-78 and Cys-102 are oxidised to a cystine. Glu-168 functions as the Proton acceptor in the catalytic mechanism. Cys-246 and Cys-292 form a disulfide bridge. Asn-303 and Asn-324 each carry an N-linked (GlcNAc...) asparagine glycan. Disulfide bonds link Cys-328-Cys-334 and Cys-380-Cys-403. Residues 467–487 form a helical membrane-spanning segment; it reads VWAAGVVFVVLTLAATLGAVA. Topologically, residues 488 to 495 are cytoplasmic; the sequence is VQVFWLQD.

The protein belongs to the GDA1/CD39 NTPase family. Requires Ca(2+) as cofactor. Mg(2+) serves as cofactor. Post-translationally, N-glycosylated.

Its subcellular location is the cell membrane. The enzyme catalyses a ribonucleoside 5'-triphosphate + 2 H2O = a ribonucleoside 5'-phosphate + 2 phosphate + 2 H(+). In terms of biological role, canalicular ectonucleoside NTPDase responsible for the main hepatic NTPDase activity. Ectonucleoside NTPDases catalyze the hydrolysis of gamma- and beta-phosphate residues of nucleotides, playing a central role in concentration of extracellular nucleotides. Has activity toward ATP, ADP, UTP and UDP, but not toward AMP. This chain is Ectonucleoside triphosphate diphosphohydrolase 8 (ENTPD8), found in Bos taurus (Bovine).